The chain runs to 173 residues: Alpha-crystallin A chain (173 aa).

N-acetylmethionine is present on M1. The tract at residues 1 to 63 is required for complex formation with BFSP1 and BFSP2; it reads MDIAIQHPWF…RTVLDSGISE (63 aa). Deamidated glutamine; partial is present on Q6. S45 carries the phosphoserine modification. Q50 carries the deamidated glutamine; partial modification. The 111-residue stretch at 52-162 folds into the sHSP domain; sequence LFRTVLDSGI…GHSERAIPVS (111 aa). N6-acetyllysine is present on residues K70 and K99. H100 is a Zn(2+) binding site. N101 carries the post-translational modification Deamidated asparagine; partial. 2 residues coordinate Zn(2+): E102 and H107. Position 122 is a phosphoserine (S122). Deamidated asparagine; partial is present on N123. The segment at 144–173 is disordered; it reads PKVPSGMDAGHSERAIPVSREEKPSSAPSS. Over residues 153–167 the composition is skewed to basic and acidic residues; sequence GHSERAIPVSREEKP. Position 154 (H154) interacts with Zn(2+). S162 carries O-linked (GlcNAc) serine glycosylation.

The protein belongs to the small heat shock protein (HSP20) family. Heteromer composed of three CRYAA and one CRYAB subunits. Inter-subunit bridging via zinc ions enhances stability, which is crucial as there is no protein turn over in the lens. Can also form homodimers and homotetramers (dimers of dimers) which serve as the building blocks of homooligomers. Within homooligomers, the zinc-binding motif is created from residues of 3 different molecules. His-100 and Glu-102 from one molecule are ligands of the zinc ion, and His-107 and His-154 residues from additional molecules complete the site with tetrahedral coordination geometry. Part of a complex required for lens intermediate filament formation composed of BFSP1, BFSP2 and CRYAA. Post-translationally, acetylation at Lys-70 may increase chaperone activity. Undergoes age-dependent proteolytical cleavage at the C-terminus.

Its subcellular location is the cytoplasm. It localises to the nucleus. Contributes to the transparency and refractive index of the lens. Acts as a chaperone, preventing aggregation of various proteins under a wide range of stress conditions. Required for the correct formation of lens intermediate filaments as part of a complex composed of BFSP1, BFSP2 and CRYAA. The sequence is that of Alpha-crystallin A chain (CRYAA) from Melursus ursinus (Sloth bear).